The chain runs to 37 residues: Cytochrome b6-f complex subunit 5 (37 aa).

Residues 5–25 (FLFGIVLGLIPITLAGLFVTA) form a helical membrane-spanning segment.

This sequence belongs to the PetG family. In terms of assembly, the 4 large subunits of the cytochrome b6-f complex are cytochrome b6, subunit IV (17 kDa polypeptide, PetD), cytochrome f and the Rieske protein, while the 4 small subunits are PetG, PetL, PetM and PetN. The complex functions as a dimer.

Its subcellular location is the plastid thylakoid membrane. Its function is as follows. Component of the cytochrome b6-f complex, which mediates electron transfer between photosystem II (PSII) and photosystem I (PSI), cyclic electron flow around PSI, and state transitions. PetG is required for either the stability or assembly of the cytochrome b6-f complex. The chain is Cytochrome b6-f complex subunit 5 from Cuscuta reflexa (Southern Asian dodder).